We begin with the raw amino-acid sequence, 659 residues long: MESGRRPIVPYTGPVPDVKKLLTENRFARLADLVVPLEVLGETDFVRHIHAQFENLSRDEMDELVLARTVAINSAPSLFSILLMAEETCSYFSAIDRLDIPVNPYDPYASTLSALKHATFSKLNVAKLSCMMSNGERPPSASSDYDFLKKIASGNGATVKSFSRSSESTVAPFPAATKQVPDISDIREFDFETFRHPFQKVICFLATIEKVISEIKGHRAPGCIAGGPINPKDRSRYIRDYDKQGIMRRYKDGCIIGLVKQGFCEHACNDNACRRRCKFALSVPYNLGMVFCPPTENSSVEDMDAYFERNRCPTRNGSFDDSRSATSGDGSSCSSAHKVTTPTDGVMMPEFPFSDQTDTSNNGTVRFSERRVSSSSKHRRRSNKHISPLDRPNDYHYQKNQPTPSDEKRYYHGSGSSSTEAVSTASAPLTGSAANQHPQHCGGQSGSDTGVISRGEGRHHGSHNGIPDFVSRSPVTTPPEVFSPERRSSEERSSSDQRRKSPLSRSASATSGGSKRRSFVDSPPRHESEDEDEDSDSSSSEAQKDRFKKRSGSRSNTPPSSPSKPDSAPAASASPGGDGGNDSDDGATEKGVTSNAKESVRVSERFETGDKSPTFIETEDESDDEDDQMSITSYDHSESSSAESGSETDGEDGESDMTL.

Cys-130, His-266, Cys-268, and Cys-273 together coordinate Zn(2+). The segment at 130 to 273 (CMMSNGERPP…CEHACNDNAC (144 aa)) adopts a CHC2-type zinc-finger fold. The disordered stretch occupies residues 317-659 (GSFDDSRSAT…GEDGESDMTL (343 aa)). Residues 324–336 (SATSGDGSSCSSA) are compositionally biased toward low complexity. Residues 354–365 (SDQTDTSNNGTV) are compositionally biased toward polar residues. Over residues 387-397 (SPLDRPNDYHY) the composition is skewed to basic and acidic residues. The segment covering 413-427 (GSGSSSTEAVSTASA) has biased composition (low complexity). Residues 483 to 499 (SPERRSSEERSSSDQRR) are compositionally biased toward basic and acidic residues. Polar residues predominate over residues 503 to 513 (LSRSASATSGG). Residues 553–575 (SRSNTPPSSPSKPDSAPAASASP) show a composition bias toward low complexity. Residues 598–610 (ESVRVSERFETGD) show a composition bias toward basic and acidic residues. 2 stretches are compositionally biased toward acidic residues: residues 617-628 (ETEDESDDEDDQ) and 646-659 (SETD…DMTL).

It belongs to the HHV-1 ICP27 protein family.

It is found in the virion tegument. The protein localises to the virion. The protein resides in the host nucleus. Its subcellular location is the host cytoplasm. Immediate early (EI) protein that plays many roles during productive infection including regulation of viral gene expression and nuclear export of intronless viral RNAs. This chain is mRNA export factor ICP27 homolog, found in Elephantid herpesvirus 1 (isolate Asian elephant/Berlin/Kiba/1998) (EIHV-1).